Here is a 641-residue protein sequence, read N- to C-terminus: Bifunctional protein glk (641 aa).

A glucokinase region spans residues 1 to 340; that stretch reads MSTGAQTKAA…QLSNRTGGAS (340 aa). 23-28 contributes to the ATP binding site; sequence ADVGGT. The HTH rpiR-type domain maps to 341–417; that stretch reads SAVFERIRQM…LKLATGLTGT (77 aa). A putative HTH-type transcriptional regulator region spans residues 341–641; sequence SAVFERIRQM…SHGAAPAAKD (301 aa). A DNA-binding region (H-T-H motif) is located at residues 377 to 396; that stretch reads IVDIARKADVSQPTVIRFCR. The region spanning 461–600 is the SIS domain; that stretch reads AIDILNNARR…AVGVAIRRAA (140 aa). Residues 576–596 traverse the membrane as a helical segment; that stretch reads SMISRILHLVMIDILAVGVAI.

In the N-terminal section; belongs to the bacterial glucokinase family.

It localises to the membrane. It catalyses the reaction D-glucose + ATP = D-glucose 6-phosphate + ADP + H(+). This is Bifunctional protein glk (glk) from Burkholderia pseudomallei (strain 1710b).